A 1427-amino-acid polypeptide reads, in one-letter code: Lysophospholipase NTE1 (1427 aa).

The Cytoplasmic portion of the chain corresponds to 1 to 60; it reads MDSLHVSSTSVLVDVVEAVETATSLVVDTAEAVATEQATPTAVISNALARSAYAAHTSLS. The chain crosses the membrane as a helical span at residues 61–81; the sequence is YLAWAFGLWFLRLIGWVCYGI. Residues 82 to 96 are Lumenal-facing; it reads PTYVLGLLGRTINIS. The chain crosses the membrane as a helical span at residues 97–117; sequence LQFSSLLLILIALVTVVVAVV. Residues 118–1427 lie on the Cytoplasmic side of the membrane; sequence RYKYLTVYSR…KRTIARRNSI (1310 aa). Polar residues predominate over residues 281-296; sequence PMTSASDVPNMSLSSD. The disordered stretch occupies residues 281-315; it reads PMTSASDVPNMSLSSDGSDDLQKGEPQFGEPRLSE. A nucleoside 3',5'-cyclic phosphate is bound by residues 615-735 and 731-870; these read LMAA…LTKV and SLTK…VASR. The interval 787-807 is disordered; the sequence is GIVGGESGDAKDGKSHRKNLT. The 165-residue stretch at 1124–1288 folds into the PNPLA domain; the sequence is LVLGGGGARG…VDNLPVSEMK (165 aa). A GXGXXG motif is present at residues 1128-1133; sequence GGGARG. The GXSXG motif lies at 1155–1159; that stretch reads GTSIG. Catalysis depends on serine 1157, which acts as the Nucleophile. Aspartate 1275 acts as the Proton acceptor in catalysis. The DGA/G signature appears at 1275 to 1277; the sequence is DGG.

This sequence belongs to the NTE family.

It is found in the endoplasmic reticulum membrane. The catalysed reaction is a 1-acyl-sn-glycero-3-phosphocholine + H2O = sn-glycerol 3-phosphocholine + a fatty acid + H(+). Its activity is regulated as follows. Inhibited by organophosphorus esters. Intracellular phospholipase B that catalyzes the double deacylation of phosphatidylcholine (PC) to glycerophosphocholine (GroPCho). Plays an important role in membrane lipid homeostasis. Responsible for the rapid PC turnover in response to inositol, elevated temperatures, or when choline is present in the growth medium. The sequence is that of Lysophospholipase NTE1 (NTE1) from Yarrowia lipolytica (strain CLIB 122 / E 150) (Yeast).